Here is a 118-residue protein sequence, read N- to C-terminus: Holo-[acyl-carrier-protein] synthase (118 aa).

Aspartate 8 and glutamate 58 together coordinate Mg(2+).

The protein belongs to the P-Pant transferase superfamily. AcpS family. Mg(2+) serves as cofactor.

Its subcellular location is the cytoplasm. It catalyses the reaction apo-[ACP] + CoA = holo-[ACP] + adenosine 3',5'-bisphosphate + H(+). In terms of biological role, transfers the 4'-phosphopantetheine moiety from coenzyme A to a Ser of acyl-carrier-protein. In Listeria welshimeri serovar 6b (strain ATCC 35897 / DSM 20650 / CCUG 15529 / CIP 8149 / NCTC 11857 / SLCC 5334 / V8), this protein is Holo-[acyl-carrier-protein] synthase.